The primary structure comprises 177 residues: MSKSTNVSYERVELFENPKVPIEVEDEILEKYAESSLDHDMTVNELPRFFKDLQLEPTIWKLVRNEDVIIEGTDVIDFTKLVRCTCQLLILMNNLTVIDDLWSMLIRNCGRDVDFPQVALRDHVLSVKDLQKISNLIGADQSSGTIEMISCATDGKRLFMTYLDFGCVLGKLGYLKM.

Ser-2 is subject to N-acetylserine. Residue Lys-19 forms a Glycyl lysine isopeptide (Lys-Gly) (interchain with G-Cter in ubiquitin) linkage.

The protein resides in the nucleus. In terms of biological role, involved in nucleotide excision repair (NER) of damaged DNA. Required for the repair of RNA polymerase I-transcribed rDNA and RNA polymerase II-transcribed DNA regions. May have a role in stabilizing the DNA repair proteins RAD4 and RAD34. The sequence is that of DNA repair protein RAD33 (RAD33) from Saccharomyces cerevisiae (strain ATCC 204508 / S288c) (Baker's yeast).